A 203-amino-acid polypeptide reads, in one-letter code: Venom allergen 5 (203 aa).

4 disulfides stabilise this stretch: Cys-4-Cys-15, Cys-7-Cys-100, Cys-25-Cys-93, and Cys-169-Cys-186. In terms of domain architecture, SCP spans 45–188 (KRHNEFRQKV…WHTHYLVCNY (144 aa)).

Belongs to the CRISP family. Venom allergen 5-like subfamily. In terms of tissue distribution, expressed by the venom gland.

It localises to the secreted. In Dolichovespula arenaria (Yellow hornet), this protein is Venom allergen 5.